The following is a 316-amino-acid chain: ATP synthase gamma chain (316 aa).

It belongs to the ATPase gamma chain family. F-type ATPases have 2 components, CF(1) - the catalytic core - and CF(0) - the membrane proton channel. CF(1) has five subunits: alpha(3), beta(3), gamma(1), delta(1), epsilon(1). CF(0) has three main subunits: a, b and c.

Its subcellular location is the cellular thylakoid membrane. Its function is as follows. Produces ATP from ADP in the presence of a proton gradient across the membrane. The gamma chain is believed to be important in regulating ATPase activity and the flow of protons through the CF(0) complex. The chain is ATP synthase gamma chain from Prochlorococcus marinus (strain AS9601).